The sequence spans 125 residues: Putative oxygen-evolving enhancer protein 2-2 (125 aa).

Serine 15 bears the Phosphoserine mark.

It belongs to the PsbP family.

The sequence is that of Putative oxygen-evolving enhancer protein 2-2 (PSBP2) from Arabidopsis thaliana (Mouse-ear cress).